The primary structure comprises 460 residues: Tyrosine phenol-lyase (460 aa).

Residue Lys260 is modified to N6-(pyridoxal phosphate)lysine.

Belongs to the beta-eliminating lyase family. Homotetramer. Pyridoxal 5'-phosphate is required as a cofactor.

It catalyses the reaction L-tyrosine + H2O = phenol + pyruvate + NH4(+). The sequence is that of Tyrosine phenol-lyase from Clostridium tetani (strain Massachusetts / E88).